The following is a 627-amino-acid chain: Phosphomethylpyrimidine synthase (627 aa).

The disordered stretch occupies residues 1 to 21 (MSVQSNKNLSESAQVDQQSIQ). Residues Asn231, Met260, Tyr289, His325, 345 to 347 (SRG), 386 to 389 (DGLR), and Glu425 contribute to the substrate site. A Zn(2+)-binding site is contributed by His429. Tyr452 contributes to the substrate binding site. Residue His493 participates in Zn(2+) binding. The [4Fe-4S] cluster site is built by Cys573, Cys576, and Cys581.

This sequence belongs to the ThiC family. In terms of assembly, homodimer. [4Fe-4S] cluster is required as a cofactor.

The enzyme catalyses 5-amino-1-(5-phospho-beta-D-ribosyl)imidazole + S-adenosyl-L-methionine = 4-amino-2-methyl-5-(phosphooxymethyl)pyrimidine + CO + 5'-deoxyadenosine + formate + L-methionine + 3 H(+). Its pathway is cofactor biosynthesis; thiamine diphosphate biosynthesis. In terms of biological role, catalyzes the synthesis of the hydroxymethylpyrimidine phosphate (HMP-P) moiety of thiamine from aminoimidazole ribotide (AIR) in a radical S-adenosyl-L-methionine (SAM)-dependent reaction. The protein is Phosphomethylpyrimidine synthase of Stutzerimonas stutzeri (strain A1501) (Pseudomonas stutzeri).